The primary structure comprises 300 residues: Acetylglutamate kinase (300 aa).

Residues 68–69, Arg90, and Asn195 each bind substrate; that span reads GG.

This sequence belongs to the acetylglutamate kinase family. ArgB subfamily.

It is found in the cytoplasm. The catalysed reaction is N-acetyl-L-glutamate + ATP = N-acetyl-L-glutamyl 5-phosphate + ADP. The protein operates within amino-acid biosynthesis; L-arginine biosynthesis; N(2)-acetyl-L-ornithine from L-glutamate: step 2/4. Functionally, catalyzes the ATP-dependent phosphorylation of N-acetyl-L-glutamate. The sequence is that of Acetylglutamate kinase from Halorhodospira halophila (strain DSM 244 / SL1) (Ectothiorhodospira halophila (strain DSM 244 / SL1)).